A 480-amino-acid chain; its full sequence is Cysteine--tRNA ligase (480 aa).

Residue cysteine 31 coordinates Zn(2+). A 'HIGH' region motif is present at residues 33–43; the sequence is PTVYDSSHIGH. Positions 211, 236, and 240 each coordinate Zn(2+). The short motif at 269 to 273 is the 'KMSKS' region element; that stretch reads KMSKS. Lysine 272 contributes to the ATP binding site.

It belongs to the class-I aminoacyl-tRNA synthetase family. Zn(2+) is required as a cofactor.

The enzyme catalyses tRNA(Cys) + L-cysteine + ATP = L-cysteinyl-tRNA(Cys) + AMP + diphosphate. In Encephalitozoon cuniculi (strain GB-M1) (Microsporidian parasite), this protein is Cysteine--tRNA ligase.